The following is a 1055-amino-acid chain: Ubiquitin carboxyl-terminal hydrolase 25 (1055 aa).

In terms of domain architecture, UBA-like spans Gln-14–Lys-57. The SUMO interaction domain (SIM) stretch occupies residues Asn-77–Leu-102. Ser-85 is modified (phosphoserine). The short motif at Thr-89–Thr-95 is the Required for SUMO paralog-specific binding element. UIM domains are found at residues Asp-97–Ala-116 and Thr-123–Asn-140. Lys-99 is covalently cross-linked (Glycyl lysine isopeptide (Lys-Gly) (interchain with G-Cter in SUMO); alternate). Residue Lys-99 forms a Glycyl lysine isopeptide (Lys-Gly) (interchain with G-Cter in ubiquitin); alternate linkage. One can recognise a USP domain in the interval Val-169–Asp-657. The active site involves Cys-178. Positions Val-464 to Ser-507 are disordered. Residues Ser-476–Ala-496 are compositionally biased toward polar residues. Positions Leu-497–Ser-507 are enriched in low complexity. A coiled-coil region spans residues Thr-541–Glu-578. Catalysis depends on residues His-599 and His-607. A coiled-coil region spans residues Asp-684–Leu-717. The segment at Thr-727–Phe-749 is disordered. Residue Tyr-740 is modified to Phosphotyrosine.

Belongs to the peptidase C19 family. As to quaternary structure, homotetramer, inhibited form. Homodimer, active form. Interacts with ACTA1 (via its C-terminus); the interaction occurs for all isoforms but is strongest for isoform USP25m in muscle differentiating cells. Interacts (isoform USP25m only) with MYBPC1; the interaction prevents proteasomal degradation of MYBPC1. Interacts (isoform USP25m only) with FLNC (via filament repeats 17-18, 20-21 and 24). Interacts with GAPDH. Interacts with SUMO3; the interaction sumoylates efficiently USP25. Interacts with SUMO2; the interaction sumoylates efficiently USP25. Interacts with SUMO1; the interaction only weakly sumoylates USP25. Interacts with SYK; phosphorylates USP25 and regulates USP25 intracellular levels. Post-translationally, acetylated. In terms of processing, sumoylation impairs binding to and hydrolysis of ubiquitin chains. Sumoylated preferentially with SUMO2 or SUMO3. Desumoylated by SENP1. Polyubiquitinated by SMURF1 by promoting the 'Lys-48'-linkage leading to proteasomal degradation. Preferentially monoubiquitinated but can also be polyubiquitinated. Autodeubiquitinated. Ubiquitination activates the enzymatic activity either by preventing sumoylation or by allowing novel interactions. Post-translationally, phosphorylation in the C-terminal by SYK regulates USP25 cellular levels. In terms of tissue distribution, isoform USP25a is found in most adult and fetal tissues; expression is moderately high in testis, pancreas, kidney, skeletal muscle, liver, lung, placenta, heart, but very low in peripheral blood, colon, small intestine, ovary, prostate, thymus and spleen. Expressed in the brain, with high levels in the cerebral cortex. Isoform USP25b is found in all tissues except heart and skeletal muscle. Isoform USP25m is heart and skeletal muscle specific.

The protein resides in the cytoplasm. The protein localises to the nucleus. The enzyme catalyses Thiol-dependent hydrolysis of ester, thioester, amide, peptide and isopeptide bonds formed by the C-terminal Gly of ubiquitin (a 76-residue protein attached to proteins as an intracellular targeting signal).. Deubiquitinating enzyme that hydrolyzes ubiquitin moieties conjugated to substrates and thus, functions in various biological processes including inflammation and immune response. Modulates the Wnt/beta-catenin pathway by deubiquitinating and stabilizing tankyrases TNKS1 and TNKS2. Regulates KEAP1-NRF2 axis in the defense against oxidative assaults by deubiquitinating KEAP1 and protecting it from degradation leading to degradation of the NRF2 transcription factor that is responsible for mounting an anti-oxidation gene expression program. Positively regulates RNA virus-induced innate signaling by interacting with and deubiquitinating ERLIN1 and ERLIN2. In turn, restricts virus production by regulating cholesterol biosynthetic flux. Acts as a negative regulator of interleukin-17-mediated signaling and inflammation through the removal of 'Lys-63'-linked ubiquitination of TRAF5 and TRAF6. Prevents the ubiquitination and degradation of TRAF3 to reduce the phosphorylation levels of JNK and P38, the secretion of IL-1B and to induce endotoxin tolerance. In terms of biological role, the muscle-specific isoform (USP25m) may have a role in the regulation of muscular differentiation and function. The sequence is that of Ubiquitin carboxyl-terminal hydrolase 25 (USP25) from Homo sapiens (Human).